Consider the following 142-residue polypeptide: Small ribosomal subunit protein uS12z (142 aa).

P61 is modified (hydroxyproline).

This sequence belongs to the universal ribosomal protein uS12 family.

The polypeptide is Small ribosomal subunit protein uS12z (RPS23A) (Arabidopsis thaliana (Mouse-ear cress)).